We begin with the raw amino-acid sequence, 239 residues long: Ribosomal RNA small subunit methyltransferase G (239 aa).

S-adenosyl-L-methionine-binding positions include Gly-76, Phe-81, 99-101 (DSS), 128-129 (IE), and Arg-147.

Belongs to the methyltransferase superfamily. RNA methyltransferase RsmG family.

The protein localises to the cytoplasm. Its function is as follows. Specifically methylates the N7 position of a guanine in 16S rRNA. The sequence is that of Ribosomal RNA small subunit methyltransferase G from Prochlorococcus marinus (strain MIT 9515).